Consider the following 272-residue polypeptide: HMP-PP phosphatase (272 aa).

Aspartate 8 acts as the Nucleophile in catalysis. Residues aspartate 8, aspartate 10, and aspartate 212 each coordinate Mg(2+).

The protein belongs to the HAD-like hydrolase superfamily. Cof family. The cofactor is Mg(2+).

The enzyme catalyses 4-amino-2-methyl-5-(diphosphooxymethyl)pyrimidine + H2O = 4-amino-2-methyl-5-(phosphooxymethyl)pyrimidine + phosphate + H(+). In terms of biological role, catalyzes the hydrolysis of 4-amino-2-methyl-5-hydroxymethylpyrimidine pyrophosphate (HMP-PP) to 4-amino-2-methyl-5-hydroxymethylpyrimidine phosphate (HMP-P). This is HMP-PP phosphatase from Salmonella choleraesuis (strain SC-B67).